A 472-amino-acid polypeptide reads, in one-letter code: Ribosomal protein uS12 methylthiotransferase RimO (472 aa).

In terms of domain architecture, MTTase N-terminal spans 33-143; sequence NRIGFVSLGC…VLKHVHKYVP (111 aa). Residues Cys-42, Cys-78, Cys-107, Cys-175, Cys-179, and Cys-182 each coordinate [4Fe-4S] cluster. The region spanning 161-398 is the Radical SAM core domain; it reads LTPKHYAYLK…MEVQAEISAE (238 aa). The region spanning 401–467 is the TRAM domain; it reads ARFVGRTLDI…EHDLWAEVVD (67 aa).

This sequence belongs to the methylthiotransferase family. RimO subfamily. The cofactor is [4Fe-4S] cluster.

The protein resides in the cytoplasm. It carries out the reaction L-aspartate(89)-[ribosomal protein uS12]-hydrogen + (sulfur carrier)-SH + AH2 + 2 S-adenosyl-L-methionine = 3-methylsulfanyl-L-aspartate(89)-[ribosomal protein uS12]-hydrogen + (sulfur carrier)-H + 5'-deoxyadenosine + L-methionine + A + S-adenosyl-L-homocysteine + 2 H(+). Its function is as follows. Catalyzes the methylthiolation of an aspartic acid residue of ribosomal protein uS12. This is Ribosomal protein uS12 methylthiotransferase RimO from Shewanella baltica (strain OS185).